The following is a 375-amino-acid chain: Succinyl-diaminopimelate desuccinylase (375 aa).

Histidine 66 is a binding site for Zn(2+). The active site involves aspartate 68. Aspartate 99 contributes to the Zn(2+) binding site. Residue glutamate 133 is the Proton acceptor of the active site. Glutamate 134, glutamate 162, and histidine 348 together coordinate Zn(2+).

The protein belongs to the peptidase M20A family. DapE subfamily. Homodimer. Zn(2+) is required as a cofactor. It depends on Co(2+) as a cofactor.

It carries out the reaction N-succinyl-(2S,6S)-2,6-diaminopimelate + H2O = (2S,6S)-2,6-diaminopimelate + succinate. Its pathway is amino-acid biosynthesis; L-lysine biosynthesis via DAP pathway; LL-2,6-diaminopimelate from (S)-tetrahydrodipicolinate (succinylase route): step 3/3. Functionally, catalyzes the hydrolysis of N-succinyl-L,L-diaminopimelic acid (SDAP), forming succinate and LL-2,6-diaminopimelate (DAP), an intermediate involved in the bacterial biosynthesis of lysine and meso-diaminopimelic acid, an essential component of bacterial cell walls. The polypeptide is Succinyl-diaminopimelate desuccinylase (Citrobacter koseri (strain ATCC BAA-895 / CDC 4225-83 / SGSC4696)).